A 238-amino-acid polypeptide reads, in one-letter code: Ribose-5-phosphate isomerase A (238 aa).

Residues 30-33 (SGST), 87-90 (DGAD), and 100-103 (KGGG) each bind substrate. The active-site Proton acceptor is Glu109. Lys127 contributes to the substrate binding site.

The protein belongs to the ribose 5-phosphate isomerase family. Homodimer.

The catalysed reaction is aldehydo-D-ribose 5-phosphate = D-ribulose 5-phosphate. It functions in the pathway carbohydrate degradation; pentose phosphate pathway; D-ribose 5-phosphate from D-ribulose 5-phosphate (non-oxidative stage): step 1/1. Functionally, catalyzes the reversible conversion of ribose-5-phosphate to ribulose 5-phosphate. This chain is Ribose-5-phosphate isomerase A, found in Prochlorococcus marinus (strain MIT 9303).